Here is a 469-residue protein sequence, read N- to C-terminus: Ribulose bisphosphate carboxylase large chain (469 aa).

Position 5 is an N6,N6,N6-trimethyllysine (Lys-5). Residues Asn-114 and Thr-164 each contribute to the substrate site. Lys-166 functions as the Proton acceptor in the catalytic mechanism. Lys-168 is a binding site for substrate. Mg(2+) contacts are provided by Lys-192, Asp-194, and Glu-195. Lys-192 carries the post-translational modification N6-carboxylysine. His-285 (proton acceptor) is an active-site residue. Arg-286, His-318, and Ser-370 together coordinate substrate.

This sequence belongs to the RuBisCO large chain family. Type I subfamily. In terms of assembly, heterohexadecamer of 8 large chains and 8 small chains; disulfide-linked. The disulfide link is formed within the large subunit homodimers. The cofactor is Mg(2+). In terms of processing, the disulfide bond which can form in the large chain dimeric partners within the hexadecamer appears to be associated with oxidative stress and protein turnover.

The protein localises to the plastid. It is found in the chloroplast. It catalyses the reaction 2 (2R)-3-phosphoglycerate + 2 H(+) = D-ribulose 1,5-bisphosphate + CO2 + H2O. The catalysed reaction is D-ribulose 1,5-bisphosphate + O2 = 2-phosphoglycolate + (2R)-3-phosphoglycerate + 2 H(+). Functionally, ruBisCO catalyzes two reactions: the carboxylation of D-ribulose 1,5-bisphosphate, the primary event in carbon dioxide fixation, as well as the oxidative fragmentation of the pentose substrate in the photorespiration process. Both reactions occur simultaneously and in competition at the same active site. The protein is Ribulose bisphosphate carboxylase large chain of Antirhea lucida (Palo iloron).